Here is a 769-residue protein sequence, read N- to C-terminus: Serine protease HtrA-like (769 aa).

Positions 1-20 (MDIGKKHVIPKSQYRRKRRE) are enriched in basic residues. Residues 1–388 (MDIGKKHVIP…KKATSKLNKG (388 aa)) form a disordered region. 3 stretches are compositionally biased toward basic and acidic residues: residues 21–64 (FFHN…ERFK), 71–87 (LEQRNRDVNENKAEESK), and 96–108 (YNKDHYLTDDVSK). Residues 126–139 (YEQNTEATLSTNST) are compositionally biased toward polar residues. Over residues 140–186 (DKVESTDMRKLSSDKNKVGHEEQHVLSKPSEHDKETRIDFESSRTDS) the composition is skewed to basic and acidic residues. Over residues 247-262 (QQSQNEQTKTYTYGDS) the composition is skewed to polar residues. 2 stretches are compositionally biased toward basic and acidic residues: residues 264 to 296 (QNDKSNHENDLSHHTPSISDDKDYVMREDHIVD) and 310 to 330 (KIDDDRKLDEKIHVEDKHKQN). Polar residues predominate over residues 331–347 (ADSSETVGYQSQSSASH). Over residues 348–364 (RSTEKRNMAINDHDKLN) the composition is skewed to basic and acidic residues. The span at 366–388 (QKPNTKTSANNNQKKATSKLNKG) shows a compositional bias: polar residues. The chain crosses the membrane as a helical span at residues 410 to 430 (LVILMGIIILIVILNAIFNNV). Catalysis depends on charge relay system residues histidine 504, aspartate 534, and serine 619. In terms of domain architecture, PDZ spans 680-733 (IASLNSFERQAVKLLGKVKNGVVVDQVDNNGLADQSGLKKGDVITELDGKLLED).

This sequence belongs to the peptidase S1C family.

It is found in the cell membrane. The polypeptide is Serine protease HtrA-like (Staphylococcus aureus (strain MRSA252)).